The sequence spans 227 residues: Triggering receptor expressed on myeloid cells 2 (227 aa).

The first 18 residues, 1–18, serve as a signal peptide directing secretion; the sequence is MGPLHQFLLLLITALSQA. Residues 19–171 lie on the Extracellular side of the membrane; sequence LNTTVLQGMA…NQETSFPPTS (153 aa). Asn-20 carries an N-linked (GlcNAc...) asparagine glycan. An Ig-like V-type domain is found at 29-112; sequence GQSLRVSCTY…GDAGLYQCQS (84 aa). Cystine bridges form between Cys-36/Cys-110 and Cys-51/Cys-60. An a 1,2-diacyl-sn-glycero-3-phospho-L-serine-binding site is contributed by His-67. Residue Asn-79 is glycosylated (N-linked (GlcNAc...) asparagine). Thr-88 contributes to the a 1,2-diacyl-sn-glycero-3-phospho-L-serine binding site. The helical transmembrane segment at 172–192 threads the bilayer; it reads ILLLLACVLLSKFLAASILWA. Residues 193–227 are Cytoplasmic-facing; that stretch reads VARGRQKPGTPVVRGLDCGQDAGHQLQILTGPGGT.

Monomer. After ectodomain shedding, the extracellular domain oligomerizes, which is enhanced and stabilized by binding of phosphatidylserine. Interacts with TYROBP/DAP12. Interaction with TYROBP is required for stabilization of the TREM2 C-terminal fragment (TREM2-CTF) which is produced by proteolytic processing. Interacts with PLXNA1 (via TIG domains); the interaction mediates SEMA6D binding and signaling through TYROBP. In terms of processing, undergoes ectodomain shedding through proteolytic cleavage by ADAM10 and ADAM17 to produce a transmembrane segment, the TREM2 C-terminal fragment (TREM2-CTF), which is subsequently cleaved by gamma-secretase. As to expression, expressed in the brain, specifically in microglia (at protein level). Expressed in macrophages (at protein level). Expressed at higher levels in the CNS, heart and lung than in lymph nodes or in other non-lymphoid tissues such as kidney, liver and testis. In the CNS not all microglia express TREM2. Brain regions with an incomplete blood-brain barrier had the lowest percentages of TREM2 expressing microglia, whereas the lateral entorhinal and cingulate cortex had the highest percentages.

Its subcellular location is the cell membrane. It is found in the secreted. In terms of biological role, forms a receptor signaling complex with TYROBP which mediates signaling and cell activation following ligand binding. Acts as a receptor for amyloid-beta protein 42, a cleavage product of the amyloid-beta precursor protein APP, and mediates its uptake and degradation by microglia. Binding to amyloid-beta 42 mediates microglial activation, proliferation, migration, apoptosis and expression of pro-inflammatory cytokines, such as IL6R and CCL3, and the anti-inflammatory cytokine ARG1. Acts as a receptor for lipoprotein particles such as LDL, VLDL, and HDL and for apolipoproteins such as APOA1, APOA2, APOB, APOE, APOE2, APOE3, APOE4, and CLU and enhances their uptake in microglia. Binds phospholipids (preferably anionic lipids) such as phosphatidylserine, phosphatidylethanolamine, phosphatidylglycerol and sphingomyelin. Regulates microglial proliferation by acting as an upstream regulator of the Wnt/beta-catenin signaling cascade. Required for microglial phagocytosis of apoptotic neurons. Also required for microglial activation and phagocytosis of myelin debris after neuronal injury and of neuronal synapses during synapse elimination in the developing brain. Regulates microglial chemotaxis and process outgrowth, and also the microglial response to oxidative stress and lipopolysaccharide. It suppresses PI3K and NF-kappa-B signaling in response to lipopolysaccharide; thus promoting phagocytosis, suppressing pro-inflammatory cytokine and nitric oxide production, inhibiting apoptosis and increasing expression of IL10 and TGFB. During oxidative stress, it promotes anti-apoptotic NF-kappa-B signaling and ERK signaling. Plays a role in microglial MTOR activation and metabolism. Regulates age-related changes in microglial numbers. Triggers activation of the immune responses in macrophages and dendritic cells. Mediates cytokine-induced formation of multinucleated giant cells which are formed by the fusion of macrophages. In dendritic cells, receptor of SEMA6D with PLEXNA1 as coreceptor and mediates up-regulation of chemokine receptor CCR7 and dendritic cell maturation and survival. Involved in the positive regulation of osteoclast differentiation. This Mus musculus (Mouse) protein is Triggering receptor expressed on myeloid cells 2 (Trem2).